The primary structure comprises 593 residues: Vicilin Jug r 2.0101 (593 aa).

Composition is skewed to basic and acidic residues over residues 46–76 (LEED…EQRY) and 97–118 (RRCE…DRQD). The segment at 46-123 (LEEDQRSQEE…RDRQDPQQQY (78 aa)) is disordered. IgE-binding stretches follow at residues 49–58 (DQRSQEERER), 76–85 (YEQCQQQCER), and 101–110 (QRRQQEERER). Residues 140–149 (QRQCQQRCER) are igE-binding. Involved in cross-reactivity with peanut allergen Ara h 2; able to inhibit binding of IgE from a peanut-allergic patient to Ara h 2. The segment covering 150–178 (QYKEQQGRERGPEASPRRESRGREEEQQR) has biased composition (basic and acidic residues). The interval 150–184 (QYKEQQGRERGPEASPRRESRGREEEQQRHNPYYF) is disordered. T-cell epitope; recognized by the HLA-DRB1-restricted CD4(+) T-cells stretches follow at residues 175 to 193 (EQQR…RSRH) and 206 to 225 (FTER…VILD). Tyr182 is a Cu cation binding site. 2 consecutive Cupin type-1 domains span residues 187–341 (QSIR…DRLE) and 386–556 (ISLK…EEIE). Asn229 carries an N-linked (GlcNAc...) asparagine glycan. T-cell epitope; recognized by the HLA-DRB1-restricted CD4(+) T-cells stretches follow at residues 246 to 265 (TRGR…SFNL), 302 to 321 (PGQF…QSYL), 318 to 337 (QSYL…NTPR), 382 to 401 (SGGP…QFGQ), 414 to 433 (QEMD…MMVP), and 438 to 457 (KATV…MACP). Cu cation contacts are provided by Cys456 and His458. Positions 463–470 (SYEGQGRR) are igE-binding. The interval 478-497 (TGRFQKVTARLARGDIFVIP) is T-cell epitope; recognized by the HLA-DRB1-restricted CD4(+) T-cells. His500 provides a ligand contact to Cu cation. A coiled-coil region spans residues 529–556 (LAGQNNIINQLEREAKELSFNMPREEIE). Positions 541 to 555 (REAKELSFNMPREEI) are igE-binding. T-cell epitope; recognized by the HLA-DRB1-restricted CD4(+) T-cells regions lie at residues 542-561 (EAKE…IFES) and 558-577 (IFES…SRRG).

The protein belongs to the 7S seed storage protein family. Proteolytically cleaved. Expressed in seed (at protein level).

Functionally, seed storage protein. The chain is Vicilin Jug r 2.0101 from Juglans regia (English walnut).